Reading from the N-terminus, the 449-residue chain is Secretin receptor (449 aa).

Positions 1–25 (MLSTMRPRLSLLLLRLLLLTKAAHT) are cleaved as a signal peptide. The Extracellular portion of the chain corresponds to 26–141 (VGVPPRLCDV…NERRHAYLLK (116 aa)). Intrachain disulfides connect C46–C75, C66–C107, and C89–C123. N-linked (GlcNAc...) asparagine glycosylation is found at N72, N100, N106, and N128. Residues 142–167 (LKVMYTVGYSSSLAMLLVALSILCSF) form a helical membrane-spanning segment. Residues 168–174 (RRLHCTR) are Cytoplasmic-facing. Residues 175–195 (NYIHMHLFVSFILRALSNFIK) traverse the membrane as a helical segment. The Extracellular segment spans residues 196–216 (DAVLFSSDDVTYCDAHKVGCK). The cysteines at positions 215 and 285 are disulfide-linked. A helical transmembrane segment spans residues 217-239 (LVMIFFQYCIMANYAWLLVEGLY). Residues 240-254 (LHTLLAISFFSERKY) are Cytoplasmic-facing. The helical transmembrane segment at 255–276 (LQAFVLLGWGSPAIFVALWAIT) threads the bilayer. At 277–291 (RHFLENTGCWDINAN) the chain is on the extracellular side. A glycan (N-linked (GlcNAc...) asparagine) is linked at N291. Residues 292 to 315 (ASVWWVIRGPVILSILINFIFFIN) traverse the membrane as a helical segment. Topologically, residues 316 to 340 (ILRILMRKLRTQETRGSETNHYKRL) are cytoplasmic. The helical transmembrane segment at 341–356 (AKSTLLLIPLFGIHYI) threads the bilayer. The Extracellular portion of the chain corresponds to 357-367 (VFAFSPEDAME). The chain crosses the membrane as a helical span at residues 368-391 (VQLFFELALGSFQGLVVAVLYCFL). At 392-449 (NGEVQLEVQKKWRQWHLQEFPLRPVAFNNSFSNATNGPTHSTKASTEQSRSIPRASII) the chain is on the cytoplasmic side. Positions 425–442 (ATNGPTHSTKASTEQSRS) are enriched in polar residues. Residues 425–449 (ATNGPTHSTKASTEQSRSIPRASII) form a disordered region.

This sequence belongs to the G-protein coupled receptor 2 family. In terms of processing, phosphorylated on Ser and Thr residues at the cytoplasmic C-terminus by G protein-coupled receptor kinases (GRKs). N-glycosylated. In terms of tissue distribution, in the brain, expressed in the central amygdala, hippocampus, area postrema, nucleus of the tractus solitary and cerebellum.

It localises to the cell membrane. It is found in the basolateral cell membrane. Its function is as follows. G protein-coupled receptor activated by secretin (SCT), which is involved in different processes such as regulation of the pH of the duodenal content, food intake and water homeostasis. Ligand binding causes a conformation change that triggers signaling via guanine nucleotide-binding proteins (G proteins) and activates cAMP-dependent pathway. Upon binding to secretin, regulates the pH of the duodenum by (1) inhibiting the secretion of gastric acid from the parietal cells of the stomach and (2) stimulating the production of bicarbonate (NaHCO(3)) from the ductal cells of the pancreas. In addition to regulating the pH of the duodenal content, plays a central role in diet induced thermogenesis: acts as a non-sympathetic brown fat (BAT) activator mediating prandial thermogenesis, which consequentially induces satiation. Mechanistically, secretin released by the gut after a meal binds to secretin receptor (SCTR) in brown adipocytes, activating brown fat thermogenesis by stimulating lipolysis, which is sensed in the brain and promotes satiation. Also able to stimulate lipolysis in white adipocytes. Also plays an important role in cellular osmoregulation by regulating renal water reabsorption. Also plays a role in the central nervous system: required for synaptic plasticity. The protein is Secretin receptor of Rattus norvegicus (Rat).